An 86-amino-acid polypeptide reads, in one-letter code: Small ribosomal subunit protein uS15 (86 aa).

The interval 1–22 is disordered; that stretch reads MSIDTQKVIEDNKRSSADTGSP. A compositionally biased stretch (basic and acidic residues) spans 7-16; the sequence is KVIEDNKRSS.

The protein belongs to the universal ribosomal protein uS15 family. In terms of assembly, part of the 30S ribosomal subunit. Forms a bridge to the 50S subunit in the 70S ribosome, contacting the 23S rRNA.

Its function is as follows. One of the primary rRNA binding proteins, it binds directly to 16S rRNA where it helps nucleate assembly of the platform of the 30S subunit by binding and bridging several RNA helices of the 16S rRNA. In terms of biological role, forms an intersubunit bridge (bridge B4) with the 23S rRNA of the 50S subunit in the ribosome. This Stenotrophomonas maltophilia (strain R551-3) protein is Small ribosomal subunit protein uS15.